A 307-amino-acid chain; its full sequence is 4-hydroxy-tetrahydrodipicolinate synthase (307 aa).

Ser57 provides a ligand contact to pyruvate. The active-site Proton donor/acceptor is Tyr145. Lys173 functions as the Schiff-base intermediate with substrate in the catalytic mechanism. Residue Ile219 coordinates pyruvate.

The protein belongs to the DapA family. In terms of assembly, homotetramer; dimer of dimers.

It is found in the cytoplasm. It carries out the reaction L-aspartate 4-semialdehyde + pyruvate = (2S,4S)-4-hydroxy-2,3,4,5-tetrahydrodipicolinate + H2O + H(+). It functions in the pathway amino-acid biosynthesis; L-lysine biosynthesis via DAP pathway; (S)-tetrahydrodipicolinate from L-aspartate: step 3/4. Catalyzes the condensation of (S)-aspartate-beta-semialdehyde [(S)-ASA] and pyruvate to 4-hydroxy-tetrahydrodipicolinate (HTPA). This Polynucleobacter asymbioticus (strain DSM 18221 / CIP 109841 / QLW-P1DMWA-1) (Polynucleobacter necessarius subsp. asymbioticus) protein is 4-hydroxy-tetrahydrodipicolinate synthase.